Consider the following 123-residue polypeptide: Small ribosomal subunit protein uS12c (123 aa).

The protein belongs to the universal ribosomal protein uS12 family. In terms of assembly, part of the 30S ribosomal subunit.

The protein resides in the plastid. It is found in the chloroplast. Functionally, with S4 and S5 plays an important role in translational accuracy. Located at the interface of the 30S and 50S subunits. The protein is Small ribosomal subunit protein uS12c (rps12) of Huperzia lucidula (Shining clubmoss).